The following is a 588-amino-acid chain: 2-succinyl-5-enolpyruvyl-6-hydroxy-3-cyclohexene-1-carboxylate synthase (588 aa).

Residues 1 to 22 (MTTTGSLPAQPSSTSPRTGNPS) form a disordered region.

Belongs to the TPP enzyme family. MenD subfamily. In terms of assembly, homodimer. The cofactor is Mg(2+). Mn(2+) serves as cofactor. Thiamine diphosphate is required as a cofactor.

It catalyses the reaction isochorismate + 2-oxoglutarate + H(+) = 5-enolpyruvoyl-6-hydroxy-2-succinyl-cyclohex-3-ene-1-carboxylate + CO2. Its pathway is quinol/quinone metabolism; 1,4-dihydroxy-2-naphthoate biosynthesis; 1,4-dihydroxy-2-naphthoate from chorismate: step 2/7. It functions in the pathway quinol/quinone metabolism; menaquinone biosynthesis. Functionally, catalyzes the thiamine diphosphate-dependent decarboxylation of 2-oxoglutarate and the subsequent addition of the resulting succinic semialdehyde-thiamine pyrophosphate anion to isochorismate to yield 2-succinyl-5-enolpyruvyl-6-hydroxy-3-cyclohexene-1-carboxylate (SEPHCHC). The chain is 2-succinyl-5-enolpyruvyl-6-hydroxy-3-cyclohexene-1-carboxylate synthase from Clavibacter michiganensis subsp. michiganensis (strain NCPPB 382).